We begin with the raw amino-acid sequence, 179 residues long: Ribosome maturation factor RimM (179 aa).

Residues 97–170 (DGELSWNFFV…LITVELPEGL (74 aa)) form the PRC barrel domain.

It belongs to the RimM family. Binds ribosomal protein uS19.

It is found in the cytoplasm. Its function is as follows. An accessory protein needed during the final step in the assembly of 30S ribosomal subunit, possibly for assembly of the head region. Essential for efficient processing of 16S rRNA. May be needed both before and after RbfA during the maturation of 16S rRNA. It has affinity for free ribosomal 30S subunits but not for 70S ribosomes. This chain is Ribosome maturation factor RimM, found in Bacteroides thetaiotaomicron (strain ATCC 29148 / DSM 2079 / JCM 5827 / CCUG 10774 / NCTC 10582 / VPI-5482 / E50).